Reading from the N-terminus, the 154-residue chain is Fluoride-specific ion channel FluC 1 (154 aa).

4 consecutive transmembrane segments (helical) span residues 28–48 (VVAV…AASL), 59–79 (WTTF…MVVI), 91–111 (PFFG…AVDS), and 124–144 (LAYL…AAWA). Glycine 99 and threonine 102 together coordinate Na(+).

This sequence belongs to the fluoride channel Fluc/FEX (TC 1.A.43) family.

Its subcellular location is the cell membrane. It carries out the reaction fluoride(in) = fluoride(out). With respect to regulation, na(+) is not transported, but it plays an essential structural role and its presence is essential for fluoride channel function. Fluoride-specific ion channel. Important for reducing fluoride concentration in the cell, thus reducing its toxicity. In Streptomyces coelicolor (strain ATCC BAA-471 / A3(2) / M145), this protein is Fluoride-specific ion channel FluC 1.